Consider the following 309-residue polypeptide: Mitochondrial brown fat uncoupling protein 1 (309 aa).

Residues 1–10 (MLRAPGSDAP) are Mitochondrial intermembrane-facing. The chain crosses the membrane as a helical span at residues 11 to 32 (PTLSVRIAAAAGAACLADMITF). Solcar repeat units lie at residues 11–104 (PTLS…VREW), 113–203 (ASLG…MKEA), and 212–297 (DDLP…LKRE). Over 33 to 75 (PLDTAKVRLQIQGEGQGQPPRAPRYRGVLGTVATLARTEGLQK) the chain is Mitochondrial matrix. Arginine 58 serves as a coordination point for fatty acid 16:0. Residues 76–98 (LYSGLPAGLQRQVGFASLRIGLY) form a helical membrane-spanning segment. Residues 99 to 118 (DSVREWLSPGQGAAASLGSR) are Mitochondrial intermembrane-facing. Residues 119-135 (ISAGVMTGGAAVFIGQP) form a helical membrane-spanning segment. At 136–180 (TEVVKVRLQAQSHLHGRKPRYTGTYNAYRIIATTEGLTGLWKGTT) the chain is on the mitochondrial matrix side. A helical transmembrane segment spans residues 181 to 197 (PNLMRNVIINCTELVTY). Over 198-214 (DLMKEALVKNHLLADDL) the chain is Mitochondrial intermembrane. A helical membrane pass occupies residues 215–234 (PCHFLSALVAGFCTTVLSSP). Residues 235–268 (VDVVKTRFVNSVPEQYTSVPNCAMTMLTKEGPLA) lie on the Mitochondrial matrix side of the membrane. At cysteine 256 the chain carries Cysteine sulfenic acid (-SOH). Residues 269–291 (FFKGFVPSFLRLGSWNVIMFVCF) form a helical membrane-spanning segment. Residue lysine 271 coordinates fatty acid 16:0. Residues 292–309 (EQLKRELMKSGRTVDCAT) are Mitochondrial intermembrane-facing.

The protein belongs to the mitochondrial carrier (TC 2.A.29) family. Most probably functions as a monomer. Binds one purine nucleotide per monomer. However, has also been suggested to function as a homodimer or a homotetramer. Tightly associates with cardiolipin in the mitochondrion inner membrane; may stabilize and regulate its activity. In terms of processing, may undergo sulfenylation upon cold exposure. May increase the sensitivity of UCP1 thermogenic function to the activation by noradrenaline probably through structural effects. May undergo ubiquitin-mediated proteasomal degradation.

It localises to the mitochondrion inner membrane. It catalyses the reaction H(+)(in) = H(+)(out). Its activity is regulated as follows. Has no constitutive proton transporter activity and has to be activated by long-chain fatty acids/LCFAs. Inhibited by purine nucleotides. Both purine nucleotides and LCFAs bind the cytosolic side of the transporter and directly compete to activate or inhibit it. Activated by noradrenaline and reactive oxygen species. Despite lacking canonical translational encoding for selenocysteine, a small pool of the protein has been observed to selectively incorporate selenocysteine at 'Cys-256'. Selenocysteine-modified protein is highly sensitive to redox modification and may constitute a pool of protein highly sensitive to activation by elevated levels of reactive oxygen species (ROS). Mitochondrial protein responsible for thermogenic respiration, a specialized capacity of brown adipose tissue and beige fat that participates in non-shivering adaptive thermogenesis to temperature and diet variations and more generally to the regulation of energy balance. Functions as a long-chain fatty acid/LCFA and proton symporter, simultaneously transporting one LCFA and one proton through the inner mitochondrial membrane. However, LCFAs remaining associated with the transporter via their hydrophobic tails, it results in an apparent transport of protons activated by LCFAs. Thereby, dissipates the mitochondrial proton gradient and converts the energy of substrate oxydation into heat instead of ATP. Regulates the production of reactive oxygen species/ROS by mitochondria. This chain is Mitochondrial brown fat uncoupling protein 1, found in Canis lupus familiaris (Dog).